Consider the following 470-residue polypeptide: Magnesium transporter MRS2, mitochondrial (470 aa).

The transit peptide at 1-32 (MNRRLLVRSISCFQPLSRITFGRPNTPFLRKY) directs the protein to the mitochondrion. Residues 33 to 314 (ADTSTAANTN…RNSLMLLELK (282 aa)) lie on the Mitochondrial matrix side of the membrane. A helical membrane pass occupies residues 315-333 (VTIYTLGFTVASVLPAFYG). Residues 332-335 (YGMN) carry the YGMN motif. The Mitochondrial intermembrane portion of the chain corresponds to 334–344 (MNLKNFIEESE). A helical transmembrane segment spans residues 345–361 (WGFTSVAVFSIVSALYI). Residues 362 to 470 (TKKNFNSLRS…WKWLIEDKKN (109 aa)) are Mitochondrial matrix-facing.

Belongs to the CorA metal ion transporter (MIT) (TC 1.A.35) family. In terms of assembly, homopentamer. Forms homooligomers. Interacts with MFM1.

It is found in the mitochondrion inner membrane. Functionally, high-conductance magnesium-selective channel that mediates the influx of magnesium into the mitochondrial matrix. Essential for the splicing of mRNA group II introns in mitochondria by affecting mitochondrial magnesium concentrations, which are critical for group II intron splicing. It also suppresses a variety of mitochondrial intron mutations and its absence may disturb the assembly of mitochondrial membrane complexes. This is Magnesium transporter MRS2, mitochondrial (MRS2) from Saccharomyces cerevisiae (strain ATCC 204508 / S288c) (Baker's yeast).